The chain runs to 233 residues: MADS-box protein CMB1 (233 aa).

An MADS-box domain is found at 3-58; that stretch reads RGRVELKRIENKINRQVTFAKRRNGLLKKAYELSVLCDAEVALIVFSNRGKLYEFC. The K-box domain maps to 87-177; sequence TESSYQEYLK…KTKLEESCAS (91 aa).

The protein localises to the nucleus. The chain is MADS-box protein CMB1 (CMB1) from Dianthus caryophyllus (Carnation).